Here is a 336-residue protein sequence, read N- to C-terminus: Isopentenyl-diphosphate delta-isomerase (336 aa).

Substrate is bound at residue 5-6; sequence RK. FMN is bound by residues 60 to 62, Ser-90, and Asn-117; that span reads AMT. Gln-147 serves as a coordination point for substrate. A Mg(2+)-binding site is contributed by Glu-148. Residues Lys-179, Ser-204, Thr-209, 253-255, and 274-275 contribute to the FMN site; these read GVR and SR.

The protein belongs to the IPP isomerase type 2 family. In terms of assembly, homooctamer. Dimer of tetramers. The cofactor is FMN. NADPH is required as a cofactor. It depends on Mg(2+) as a cofactor.

It is found in the cytoplasm. It carries out the reaction isopentenyl diphosphate = dimethylallyl diphosphate. In terms of biological role, involved in the biosynthesis of isoprenoids. Catalyzes the 1,3-allylic rearrangement of the homoallylic substrate isopentenyl (IPP) to its allylic isomer, dimethylallyl diphosphate (DMAPP). This chain is Isopentenyl-diphosphate delta-isomerase, found in Streptococcus pneumoniae serotype 4 (strain ATCC BAA-334 / TIGR4).